Here is a 249-residue protein sequence, read N- to C-terminus: Cytochrome c oxidase subunit 2 (249 aa).

Residues 1 to 13 (MLNLFQIMNMINN) form the signal peptide. Over 14-40 (DVPTPYGFYFQDSATPNQEGILELHDN) the chain is Mitochondrial intermembrane. Residues 41–62 (IMFYLVVILGLVSWMLFTIVRT) traverse the membrane as a helical segment. The Mitochondrial matrix portion of the chain corresponds to 63 to 80 (YSRNPMAYKYIKHGQTIE). A helical transmembrane segment spans residues 81–105 (IIWKIFPAVILLTIAFPSFILLYLC). Residues 106-249 (DEVISPAMTI…PKFLEWLNEQ (144 aa)) are Mitochondrial intermembrane-facing. Residues histidine 184, cysteine 219, glutamate 221, cysteine 223, histidine 227, and methionine 230 each contribute to the Cu cation site. Glutamate 221 serves as a coordination point for Mg(2+).

The protein belongs to the cytochrome c oxidase subunit 2 family. In terms of assembly, component of the cytochrome c oxidase (complex IV, CIV), a multisubunit enzyme composed of a catalytic core of 3 subunits and several supernumerary subunits. The complex exists as a monomer or a dimer and forms supercomplexes (SCs) in the inner mitochondrial membrane with ubiquinol-cytochrome c oxidoreductase (cytochrome b-c1 complex, complex III, CIII). Requires Cu cation as cofactor. Post-translationally, the signal sequence of COX2 is processed by IMP1.

It localises to the mitochondrion inner membrane. It catalyses the reaction 4 Fe(II)-[cytochrome c] + O2 + 8 H(+)(in) = 4 Fe(III)-[cytochrome c] + 2 H2O + 4 H(+)(out). Its function is as follows. Component of the cytochrome c oxidase, the last enzyme in the mitochondrial electron transport chain which drives oxidative phosphorylation. The respiratory chain contains 3 multisubunit complexes succinate dehydrogenase (complex II, CII), ubiquinol-cytochrome c oxidoreductase (cytochrome b-c1 complex, complex III, CIII) and cytochrome c oxidase (complex IV, CIV), that cooperate to transfer electrons derived from NADH and succinate to molecular oxygen, creating an electrochemical gradient over the inner membrane that drives transmembrane transport and the ATP synthase. Cytochrome c oxidase is the component of the respiratory chain that catalyzes the reduction of oxygen to water. Electrons originating from reduced cytochrome c in the intermembrane space (IMS) are transferred via the dinuclear copper A center (CU(A)) of subunit 2 and heme A of subunit 1 to the active site in subunit 1, a binuclear center (BNC) formed by heme A3 and copper B (CU(B)). The BNC reduces molecular oxygen to 2 water molecules using 4 electrons from cytochrome c in the IMS and 4 protons from the mitochondrial matrix. This Maudiozyma exigua (Yeast) protein is Cytochrome c oxidase subunit 2 (COX2).